The chain runs to 593 residues: Tyrosine-protein phosphatase non-receptor type 9 (593 aa).

M1 is modified (N-acetylmethionine). Residues 1–21 (MEPATAPRPDMAPELTPEEEQ) form a disordered region. The region spanning 84 to 243 (EEPLRSEILS…NLGGYIKIDL (160 aa)) is the CRAL-TRIO domain. Residues 303 to 574 (IYEEYEDIRR…YFCYKAILEF (272 aa)) form the Tyrosine-protein phosphatase domain. Substrate-binding positions include D470, 515–521 (CSAGIGR), and Q559. C515 serves as the catalytic Phosphocysteine intermediate.

Belongs to the protein-tyrosine phosphatase family. Non-receptor class 3 subfamily.

It localises to the cytoplasm. The enzyme catalyses O-phospho-L-tyrosyl-[protein] + H2O = L-tyrosyl-[protein] + phosphate. Its function is as follows. Protein-tyrosine phosphatase that could participate in the transfer of hydrophobic ligands or in functions of the Golgi apparatus. This chain is Tyrosine-protein phosphatase non-receptor type 9 (Ptpn9), found in Rattus norvegicus (Rat).